The following is a 681-amino-acid chain: Probable glutamate carboxypeptidase LAMP1 (681 aa).

Over 1 to 6 the chain is Cytoplasmic; the sequence is MSKSKS. The helical; Signal-anchor for type II membrane protein transmembrane segment at 7-24 threads the bilayer; sequence LAFVIAALSYSFFSLFSS. Topologically, residues 25 to 681 are extracellular; the sequence is PPKSHYHELF…ASLVLKGELI (657 aa). N-linked (GlcNAc...) asparagine glycosylation is found at N42, N140, N166, and N299. Residues 241-527 are catalytic; that stretch reads SVDGCERLSD…SVLGLVALRL (287 aa). H333 and D343 together coordinate Zn(2+). Residue E380 is the Nucleophile of the active site. 2 residues coordinate Zn(2+): E381 and D409. N-linked (GlcNAc...) asparagine glycosylation occurs at N441. Residue H493 participates in Zn(2+) binding. The N-linked (GlcNAc...) asparagine glycan is linked to N536.

It belongs to the peptidase M28 family. M28B subfamily. Requires Zn(2+) as cofactor.

The protein localises to the endoplasmic reticulum membrane. It catalyses the reaction Release of an unsubstituted, C-terminal glutamyl residue, typically from Ac-Asp-Glu or folylpoly-gamma-glutamates.. In terms of biological role, acts in association with AMP1 to suppress ectopic stem cell niche formation in the shoot apical meristem (SAM) independently of cytokinin signaling pathway. This is Probable glutamate carboxypeptidase LAMP1 from Arabidopsis thaliana (Mouse-ear cress).